A 136-amino-acid chain; its full sequence is Small ribosomal subunit protein uS19 (136 aa).

Belongs to the universal ribosomal protein uS19 family.

Its function is as follows. Protein S19 forms a complex with S13 that binds strongly to the 16S ribosomal RNA. In Methanosarcina mazei (strain ATCC BAA-159 / DSM 3647 / Goe1 / Go1 / JCM 11833 / OCM 88) (Methanosarcina frisia), this protein is Small ribosomal subunit protein uS19.